A 757-amino-acid polypeptide reads, in one-letter code: 5-methyltetrahydropteroyltriglutamate--homocysteine methyltransferase (757 aa).

5-methyltetrahydropteroyltri-L-glutamate-binding positions include 16 to 19 (RELK) and K112. L-homocysteine is bound by residues 433–435 (IGS) and E486. Residues 433 to 435 (IGS) and E486 contribute to the L-methionine site. 5-methyltetrahydropteroyltri-L-glutamate contacts are provided by residues 517-518 (RC) and W563. Position 601 (D601) interacts with L-homocysteine. Residue D601 coordinates L-methionine. E607 serves as a coordination point for 5-methyltetrahydropteroyltri-L-glutamate. H643, C645, and E667 together coordinate Zn(2+). Residue H696 is the Proton donor of the active site. C728 is a binding site for Zn(2+).

Belongs to the vitamin-B12 independent methionine synthase family. It depends on Zn(2+) as a cofactor.

It carries out the reaction 5-methyltetrahydropteroyltri-L-glutamate + L-homocysteine = tetrahydropteroyltri-L-glutamate + L-methionine. The protein operates within amino-acid biosynthesis; L-methionine biosynthesis via de novo pathway; L-methionine from L-homocysteine (MetE route): step 1/1. Its function is as follows. Catalyzes the transfer of a methyl group from 5-methyltetrahydrofolate to homocysteine resulting in methionine formation. The protein is 5-methyltetrahydropteroyltriglutamate--homocysteine methyltransferase of Pasteurella multocida (strain Pm70).